The following is a 204-amino-acid chain: tRNA (pseudouridine(54)-N(1))-methyltransferase (204 aa).

2 residues coordinate S-adenosyl-L-methionine: Leu136 and Gly158.

Belongs to the methyltransferase superfamily. TrmY family. In terms of assembly, homodimer.

It localises to the cytoplasm. The enzyme catalyses pseudouridine(54) in tRNA + S-adenosyl-L-methionine = N(1)-methylpseudouridine(54) in tRNA + S-adenosyl-L-homocysteine + H(+). Functionally, specifically catalyzes the N1-methylation of pseudouridine at position 54 (Psi54) in tRNAs. The sequence is that of tRNA (pseudouridine(54)-N(1))-methyltransferase from Pyrococcus abyssi (strain GE5 / Orsay).